A 732-amino-acid chain; its full sequence is Kell blood group glycoprotein (732 aa).

The disordered stretch occupies residues 1 to 37 (MEGGDQSEEEPRERSQAGGMGTLWSQESTPEERLPVE). Topologically, residues 1–47 (MEGGDQSEEEPRERSQAGGMGTLWSQESTPEERLPVEGSRPWAVARR) are cytoplasmic. Phosphoserine is present on S7. Residues 48-67 (VLTAILILGLLLCFSVLLFY) traverse the membrane as a helical; Signal-anchor for type II membrane protein segment. Residues 68–732 (NFQNCGPRPC…LNPSSRCQLW (665 aa)) are Extracellular-facing. Residues 76–732 (PCETSVCLDL…LNPSSRCQLW (657 aa)) form the Peptidase M13 domain. C77 and C82 are disulfide-bonded. N-linked (GlcNAc...) asparagine glycosylation is found at N94 and N115. 4 cysteine pairs are disulfide-bonded: C100–C717, C108–C682, C155–C410, and C610–C729. N191 is a glycosylation site (N-linked (GlcNAc...) asparagine; in KEL2 antigen). A glycan (N-linked (GlcNAc...) asparagine) is linked at N345. H581 serves as a coordination point for Zn(2+). The active site involves E582. Zn(2+) is bound at residue H585. N627 carries an N-linked (GlcNAc...) asparagine glycan. Residue E634 participates in Zn(2+) binding. D638 serves as the catalytic Proton donor. The segment at 684-703 (KPSPQDSHDTHSPPHLRVHG) is disordered.

It belongs to the peptidase M13 family. As to quaternary structure, heterodimer with XK; disulfide-linked. The cofactor is Zn(2+). Post-translationally, N-glycosylated. In terms of tissue distribution, expressed at high levels in erythrocytes and testis (in Sertoli cells), and, at lower levels, in skeletal muscle, tonsils (in follicular dendritic cells), lymph node, spleen and appendix (at protein level). Also expressed in many adult and fetal nonerythroid tissues, including brain, spleen, lymph nodes and bone marrow.

The protein localises to the cell membrane. Zinc endopeptidase with endothelin-3-converting enzyme activity. Cleaves EDN1, EDN2 and EDN3, with a marked preference for EDN3. The protein is Kell blood group glycoprotein (KEL) of Homo sapiens (Human).